A 352-amino-acid polypeptide reads, in one-letter code: Serine protease 55 (352 aa).

The N-terminal stretch at 1-18 (MLLFSVLLLLSLVTGTQL) is a signal peptide. In terms of domain architecture, Peptidase S1 spans 68 to 300 (ITGGMEAEVG…YNLWIEKVTQ (233 aa)). The cysteines at positions 93 and 109 are disulfide-linked. Active-site charge relay system residues include His-108 and Asp-156. Intrachain disulfides connect Cys-189–Cys-256, Cys-222–Cys-235, and Cys-246–Cys-276. A glycan (N-linked (GlcNAc...) asparagine) is linked at Asn-240. Ser-250 serves as the catalytic Charge relay system. A disordered region spans residues 308–330 (AEKRRTSVKQKPMGSPVSGVPEP). Over residues 319-330 (PMGSPVSGVPEP) the composition is skewed to low complexity. The GPI-anchor amidated serine moiety is linked to residue Ser-325. Residues 326–352 (GVPEPGSPRSWLLLCPLSHVLFRAILY) constitute a propeptide, removed in mature form.

This sequence belongs to the peptidase S1 family. As to expression, only detected in testis. Expressed in spermatogonia, spermatocytes, spermatids, Leydig and Sertoli cells. Expressed in prostate cancer and ovarian cancer (at protein level).

Its subcellular location is the cell membrane. It is found in the cytoplasm. The protein localises to the cytosol. Probable serine protease, which plays a crucial role in the fertility of male mice including sperm migration and sperm-egg interaction. This chain is Serine protease 55 (PRSS55), found in Homo sapiens (Human).